The following is a 144-amino-acid chain: Large ribosomal subunit protein uL16 (144 aa).

The protein belongs to the universal ribosomal protein uL16 family. In terms of assembly, part of the 50S ribosomal subunit.

Binds 23S rRNA and is also seen to make contacts with the A and possibly P site tRNAs. The chain is Large ribosomal subunit protein uL16 from Bacillus anthracis (strain A0248).